A 1649-amino-acid chain; its full sequence is Cortactin-binding protein 2 (1649 aa).

The tract at residues 1–27 (MATDSASCEPDLSRAPGDAEGATAEAA) is disordered. Over residues 15–25 (APGDAEGATAE) the composition is skewed to low complexity. Residues 118–275 (RKMQERMSAQ…EQMKKGNDGK (158 aa)) adopt a coiled-coil conformation. 3 disordered regions span residues 322-439 (PLSV…PGLN), 451-476 (GNAN…PTSR), and 492-604 (ALSR…LPPK). The segment covering 330-342 (STGSPLVSTNTKG) has biased composition (polar residues). Low complexity predominate over residues 395 to 416 (STPSTPSGTAPAAAQTLGAAPQ). The span at 492–503 (ALSRFTSPQAGA) shows a compositional bias: polar residues. Arg-495 is modified (asymmetric dimethylarginine). ANK repeat units lie at residues 699–729 (GRPT…DINY), 733–762 (DSHS…RVDA), 766–795 (NGFT…NINH), 799–828 (GGQT…DRSI), 832–861 (DGWT…PAPG), and 901–931 (EGWT…EPER). Positions 1438-1471 (SAAWRKVNTSPRKKPGHFSSPMWNKPDLKHEGMR) are disordered. At Ser-1510 the chain carries Phosphoserine. A disordered region spans residues 1527–1649 (KSESDISKIA…KHEHVEKRNK (123 aa)). A compositionally biased stretch (basic and acidic residues) spans 1528-1546 (SESDISKIADSREDLRTFD). Polar residues-rich tracts occupy residues 1547–1557 (SSRTNPVTSAP), 1571–1584 (PLSS…SNSK), and 1621–1630 (NTRQLEINNN). Residues 1631-1649 (SKEENWNVDKHEHVEKRNK) are compositionally biased toward basic and acidic residues.

As to quaternary structure, interacts with CTTN/cortactin SH3 domain. Interacts with STRN, STRN4/zinedin and MOB4/phocein; this interactions mediate the association with the STRIPAK core complex and may regulate dendritic spine distribution of the STRIPAK complex in hippocampal neurons. Activation of glutamate receptors weakens the interaction with STRN and STRN4.

It is found in the cytoplasm. Its subcellular location is the cell cortex. The protein localises to the cell projection. It localises to the dendritic spine. Functionally, regulates the dendritic spine distribution of CTTN/cortactin in hippocampal neurons, and thus controls dendritic spinogenesis and dendritic spine maintenance. Associates with the striatin-interacting phosphatase and kinase (STRIPAK) core complex to regulate dendritic spine distribution of the STRIPAK complex in hippocampal neurons. This Rattus norvegicus (Rat) protein is Cortactin-binding protein 2 (Cttnbp2).